Consider the following 552-residue polypeptide: Protein FAM234A (552 aa).

Basic and acidic residues predominate over residues 1-22 (MLDHKDLEAEIHPLKNEERKSQ). Residues 1–40 (MLDHKDLEAEIHPLKNEERKSQENLGNPSKNEDNVKSAPP) are disordered. Over 1–49 (MLDHKDLEAEIHPLKNEERKSQENLGNPSKNEDNVKSAPPQSRLSRCRA) the chain is Cytoplasmic. Ser-21 is subject to Phosphoserine. A helical; Signal-anchor for type II membrane protein transmembrane segment spans residues 50-70 (AAFFLSLFLCLFVVFVVSFVI). Topologically, residues 71–552 (PCPDRPASQR…FSRLRYQSEA (482 aa)) are extracellular. N-linked (GlcNAc...) asparagine glycosylation is found at Asn-116, Asn-314, Asn-389, and Asn-473.

The protein belongs to the FAM234 family.

The protein resides in the membrane. The chain is Protein FAM234A from Homo sapiens (Human).